The sequence spans 330 residues: Phenylalanine--tRNA ligase alpha subunit (330 aa).

Glu-246 serves as a coordination point for Mg(2+).

The protein belongs to the class-II aminoacyl-tRNA synthetase family. Phe-tRNA synthetase alpha subunit type 1 subfamily. In terms of assembly, tetramer of two alpha and two beta subunits. Requires Mg(2+) as cofactor.

It is found in the cytoplasm. The catalysed reaction is tRNA(Phe) + L-phenylalanine + ATP = L-phenylalanyl-tRNA(Phe) + AMP + diphosphate + H(+). The chain is Phenylalanine--tRNA ligase alpha subunit from Campylobacter jejuni subsp. jejuni serotype O:6 (strain 81116 / NCTC 11828).